Reading from the N-terminus, the 532-residue chain is Fe-S cluster assembly factor HCF101, chloroplastic (532 aa).

Residues 1-61 (MPLLHPQSLR…RVSQNLSVAK (61 aa)) constitute a chloroplast transit peptide. Residue Ala-62 is modified to N-acetylalanine. An ATP-binding site is contributed by 184–191 (CKGGVGKS).

Belongs to the Mrp/NBP35 ATP-binding proteins family. [4Fe-4S] cluster serves as cofactor. Expressed in aerial tissues exposed to light. Very low expression in roots.

The protein resides in the plastid. It is found in the chloroplast stroma. In terms of biological role, required for photosystem I (PSI) biosynthesis and assembly. May serve as a chloroplast scaffold protein that specifically assembles iron-sulfur (4Fe-4S) clusters and transfers them to the chloroplast PSI and ferredoxin-thioredoxin (FTR) complexes. Can assemble a 4Fe-4S cluster and transfer it to apoproteins in yeast cells. Probably not required for assembly or stability of plastidic 2Fe-2S clusters. The protein is Fe-S cluster assembly factor HCF101, chloroplastic (HCF101) of Arabidopsis thaliana (Mouse-ear cress).